Consider the following 384-residue polypeptide: Tryptophan--tRNA ligase (384 aa).

The short motif at 81–89 (PSGPMHIGH) is the 'HIGH' region element. The short motif at 252-256 (KMSAS) is the 'KMSKS' region element.

It belongs to the class-I aminoacyl-tRNA synthetase family.

It localises to the cytoplasm. The enzyme catalyses tRNA(Trp) + L-tryptophan + ATP = L-tryptophyl-tRNA(Trp) + AMP + diphosphate + H(+). In Thermococcus kodakarensis (strain ATCC BAA-918 / JCM 12380 / KOD1) (Pyrococcus kodakaraensis (strain KOD1)), this protein is Tryptophan--tRNA ligase.